The primary structure comprises 220 residues: Orotate phosphoribosyltransferase (220 aa).

K26 contacts 5-phospho-alpha-D-ribose 1-diphosphate. 34-35 (FF) lines the orotate pocket. 5-phospho-alpha-D-ribose 1-diphosphate is bound by residues 72-73 (YK), R101, K102, K105, H107, and 126-134 (DDVITAGTS). Residues T130 and R158 each contribute to the orotate site.

This sequence belongs to the purine/pyrimidine phosphoribosyltransferase family. PyrE subfamily. Homodimer. Requires Mg(2+) as cofactor.

It carries out the reaction orotidine 5'-phosphate + diphosphate = orotate + 5-phospho-alpha-D-ribose 1-diphosphate. Its pathway is pyrimidine metabolism; UMP biosynthesis via de novo pathway; UMP from orotate: step 1/2. Catalyzes the transfer of a ribosyl phosphate group from 5-phosphoribose 1-diphosphate to orotate, leading to the formation of orotidine monophosphate (OMP). The protein is Orotate phosphoribosyltransferase of Bordetella avium (strain 197N).